The chain runs to 831 residues: DNA ligase (831 aa).

NAD(+) is bound by residues 34–38, 83–84, and E114; these read DADYD and SL. K116 functions as the N6-AMP-lysine intermediate in the catalytic mechanism. R137, E174, K291, and K315 together coordinate NAD(+). Residues C409, C412, C427, and C433 each contribute to the Zn(2+) site. Residues 749 to 831 enclose the BRCT domain; that stretch reads AHTAPLNGQS…LAFLEQYSAQ (83 aa).

Belongs to the NAD-dependent DNA ligase family. LigA subfamily. It depends on Mg(2+) as a cofactor. The cofactor is Mn(2+).

The catalysed reaction is NAD(+) + (deoxyribonucleotide)n-3'-hydroxyl + 5'-phospho-(deoxyribonucleotide)m = (deoxyribonucleotide)n+m + AMP + beta-nicotinamide D-nucleotide.. DNA ligase that catalyzes the formation of phosphodiester linkages between 5'-phosphoryl and 3'-hydroxyl groups in double-stranded DNA using NAD as a coenzyme and as the energy source for the reaction. It is essential for DNA replication and repair of damaged DNA. The protein is DNA ligase of Xylella fastidiosa (strain M23).